Consider the following 252-residue polypeptide: 5'-nucleotidase SurE (252 aa).

A divalent metal cation is bound by residues Asp8, Asp9, Ser39, and Asn91.

It belongs to the SurE nucleotidase family. It depends on a divalent metal cation as a cofactor.

The protein localises to the cytoplasm. It carries out the reaction a ribonucleoside 5'-phosphate + H2O = a ribonucleoside + phosphate. Nucleotidase that shows phosphatase activity on nucleoside 5'-monophosphates. This Gemmatimonas aurantiaca (strain DSM 14586 / JCM 11422 / NBRC 100505 / T-27) protein is 5'-nucleotidase SurE.